A 116-amino-acid chain; its full sequence is uncharacterized protein (116 aa).

This is an uncharacterized protein from Saccharomyces cerevisiae (strain ATCC 204508 / S288c) (Baker's yeast).